Reading from the N-terminus, the 101-residue chain is Putative septation protein SpoVG (101 aa).

This sequence belongs to the SpoVG family.

Its function is as follows. Could be involved in septation. This chain is Putative septation protein SpoVG, found in Anaeromyxobacter dehalogenans (strain 2CP-C).